Reading from the N-terminus, the 544-residue chain is CTP synthase (544 aa).

Positions 1–266 (MATNYIFVTG…DDFVCDRFRL (266 aa)) are amidoligase domain. Position 14 (serine 14) interacts with CTP. Residue serine 14 participates in UTP binding. Residues 15–20 (SLGKGI) and aspartate 72 each bind ATP. Residues aspartate 72 and glutamate 140 each contribute to the Mg(2+) site. Residues 147–149 (DIE), 187–192 (KTKPTQ), and lysine 223 each bind CTP. Residues 187-192 (KTKPTQ) and lysine 223 contribute to the UTP site. 239 to 241 (KDV) contributes to the ATP binding site. One can recognise a Glutamine amidotransferase type-1 domain in the interval 291–542 (TIGMVGKYVE…VKAAKEHQGK (252 aa)). Glycine 352 is an L-glutamine binding site. The active-site Nucleophile; for glutamine hydrolysis is cysteine 379. L-glutamine contacts are provided by residues 380-383 (LGMQ), glutamate 403, and arginine 470. Catalysis depends on residues histidine 515 and glutamate 517.

This sequence belongs to the CTP synthase family. In terms of assembly, homotetramer.

The catalysed reaction is UTP + L-glutamine + ATP + H2O = CTP + L-glutamate + ADP + phosphate + 2 H(+). The enzyme catalyses L-glutamine + H2O = L-glutamate + NH4(+). It catalyses the reaction UTP + NH4(+) + ATP = CTP + ADP + phosphate + 2 H(+). The protein operates within pyrimidine metabolism; CTP biosynthesis via de novo pathway; CTP from UDP: step 2/2. Allosterically activated by GTP, when glutamine is the substrate; GTP has no effect on the reaction when ammonia is the substrate. The allosteric effector GTP functions by stabilizing the protein conformation that binds the tetrahedral intermediate(s) formed during glutamine hydrolysis. Inhibited by the product CTP, via allosteric rather than competitive inhibition. Functionally, catalyzes the ATP-dependent amination of UTP to CTP with either L-glutamine or ammonia as the source of nitrogen. Regulates intracellular CTP levels through interactions with the four ribonucleotide triphosphates. This is CTP synthase from Glaesserella parasuis serovar 5 (strain SH0165) (Haemophilus parasuis).